A 287-amino-acid chain; its full sequence is Urease accessory protein UreD (287 aa).

Belongs to the UreD family. In terms of assembly, ureD, UreF and UreG form a complex that acts as a GTP-hydrolysis-dependent molecular chaperone, activating the urease apoprotein by helping to assemble the nickel containing metallocenter of UreC. The UreE protein probably delivers the nickel.

It is found in the cytoplasm. In terms of biological role, required for maturation of urease via the functional incorporation of the urease nickel metallocenter. In Aliivibrio fischeri (strain MJ11) (Vibrio fischeri), this protein is Urease accessory protein UreD.